The primary structure comprises 311 residues: Methionyl-tRNA formyltransferase (311 aa).

109-112 (SLLP) lines the (6S)-5,6,7,8-tetrahydrofolate pocket.

The protein belongs to the Fmt family.

It catalyses the reaction L-methionyl-tRNA(fMet) + (6R)-10-formyltetrahydrofolate = N-formyl-L-methionyl-tRNA(fMet) + (6S)-5,6,7,8-tetrahydrofolate + H(+). Its function is as follows. Attaches a formyl group to the free amino group of methionyl-tRNA(fMet). The formyl group appears to play a dual role in the initiator identity of N-formylmethionyl-tRNA by promoting its recognition by IF2 and preventing the misappropriation of this tRNA by the elongation apparatus. The protein is Methionyl-tRNA formyltransferase of Marinobacter nauticus (strain ATCC 700491 / DSM 11845 / VT8) (Marinobacter aquaeolei).